The chain runs to 112 residues: Large ribosomal subunit protein uL22 (112 aa).

Belongs to the universal ribosomal protein uL22 family. As to quaternary structure, part of the 50S ribosomal subunit.

Its function is as follows. This protein binds specifically to 23S rRNA; its binding is stimulated by other ribosomal proteins, e.g. L4, L17, and L20. It is important during the early stages of 50S assembly. It makes multiple contacts with different domains of the 23S rRNA in the assembled 50S subunit and ribosome. In terms of biological role, the globular domain of the protein is located near the polypeptide exit tunnel on the outside of the subunit, while an extended beta-hairpin is found that lines the wall of the exit tunnel in the center of the 70S ribosome. This chain is Large ribosomal subunit protein uL22, found in Sorangium cellulosum (strain So ce56) (Polyangium cellulosum (strain So ce56)).